We begin with the raw amino-acid sequence, 645 residues long: Aspartate--tRNA ligase, mitochondrial (645 aa).

A mitochondrion-targeting transit peptide spans 1–47; the sequence is MYFPSWLSQLYRGLSRPIRRTTQPIWGSLYRSLLQSSQRRIPEFSSF. Position 219 is a phosphothreonine (Thr-219). Position 242 is a phosphoserine (Ser-242). Residues 244–247 are aspartate; that stretch reads QQFK. Arg-266 is a binding site for L-aspartate. An ATP-binding site is contributed by 266 to 268; that stretch reads RDE. Residue Lys-382 is modified to N6-acetyllysine. Glu-535 contacts ATP. L-aspartate is bound at residue Arg-542. 584–587 provides a ligand contact to ATP; the sequence is GLDR.

Belongs to the class-II aminoacyl-tRNA synthetase family. Type 1 subfamily. In terms of assembly, homodimer.

The protein localises to the mitochondrion matrix. The protein resides in the mitochondrion membrane. The catalysed reaction is tRNA(Asp) + L-aspartate + ATP = L-aspartyl-tRNA(Asp) + AMP + diphosphate. Its function is as follows. Catalyzes the attachment of aspartate to tRNA(Asp) in a two-step reaction: aspartate is first activated by ATP to form Asp-AMP and then transferred to the acceptor end of tRNA(Asp). This is Aspartate--tRNA ligase, mitochondrial (DARS2) from Homo sapiens (Human).